We begin with the raw amino-acid sequence, 208 residues long: MTKGILGKKVGMTQIFTESGEFIPVTVIEATPNVVLQVKTVETDGYEAVQVGFDDKREVLSNKPAKGHVAKANTAPKRFIREFKNIEGLEVGAELSVEQFEAGDVVDVTGTSKGKGFQGVIKRHGQSRGPMAHGSRYHRRPGSMGPVAPNRVFKNKRLAGRMGGNRVTVQNLEIVQVIPEKNVILVKGNVPGAKKSLITIKSAVKAAK.

The disordered stretch occupies residues 116 to 148 (GFQGVIKRHGQSRGPMAHGSRYHRRPGSMGPVA).

The protein belongs to the universal ribosomal protein uL3 family. Part of the 50S ribosomal subunit. Forms a cluster with proteins L14 and L19.

In terms of biological role, one of the primary rRNA binding proteins, it binds directly near the 3'-end of the 23S rRNA, where it nucleates assembly of the 50S subunit. This Streptococcus pyogenes serotype M5 (strain Manfredo) protein is Large ribosomal subunit protein uL3.